We begin with the raw amino-acid sequence, 122 residues long: Large ribosomal subunit protein bL12 (122 aa).

It belongs to the bacterial ribosomal protein bL12 family. In terms of assembly, homodimer. Part of the ribosomal stalk of the 50S ribosomal subunit. Forms a multimeric L10(L12)X complex, where L10 forms an elongated spine to which 2 to 4 L12 dimers bind in a sequential fashion. Binds GTP-bound translation factors.

In terms of biological role, forms part of the ribosomal stalk which helps the ribosome interact with GTP-bound translation factors. Is thus essential for accurate translation. The protein is Large ribosomal subunit protein bL12 of Cronobacter sakazakii (strain ATCC BAA-894) (Enterobacter sakazakii).